The sequence spans 82 residues: Small ribosomal subunit protein uS17 (82 aa).

This sequence belongs to the universal ribosomal protein uS17 family. Part of the 30S ribosomal subunit.

In terms of biological role, one of the primary rRNA binding proteins, it binds specifically to the 5'-end of 16S ribosomal RNA. The protein is Small ribosomal subunit protein uS17 of Nitrobacter winogradskyi (strain ATCC 25391 / DSM 10237 / CIP 104748 / NCIMB 11846 / Nb-255).